A 221-amino-acid chain; its full sequence is uncharacterized protein (221 aa).

The N-terminal stretch at 1–30 is a signal peptide; that stretch reads MAKFNNNILLIILIIVILFIIFYFLNKNNQ.

It localises to the virion. This is an uncharacterized protein from Acanthamoeba polyphaga mimivirus (APMV).